The following is a 232-amino-acid chain: Cell surface superoxide dismutase [Cu-Zn] 4 (232 aa).

Positions 1–15 are cleaved as a signal peptide; it reads MKYLSIISIVALALA. The N-linked (GlcNAc...) asparagine glycan is linked to Asn-53. Residues His-75 and His-77 each contribute to the Cu cation site. Asn-86 carries N-linked (GlcNAc...) asparagine glycosylation. Residue His-93 participates in Cu cation binding. Zn(2+) is bound at residue His-93. Asn-98 carries an N-linked (GlcNAc...) asparagine glycan. Asp-113 is a Zn(2+) binding site. An N-linked (GlcNAc...) asparagine glycan is attached at Asn-120. His-153 is a binding site for Cu cation. Asn-156, Asn-164, Asn-182, Asn-193, and Asn-196 each carry an N-linked (GlcNAc...) asparagine glycan. The segment covering 174–208 has biased composition (low complexity); it reads TASAATWSNSSSSSSSSSKNSTNGSSGSSTSASQG. The disordered stretch occupies residues 174–211; it reads TASAATWSNSSSSSSSSSKNSTNGSSGSSTSASQGSGA. Ser-209 is lipidated: GPI-anchor amidated serine. Residues 210 to 232 constitute a propeptide, removed in mature form; it reads GAGRAEISGFLAAGIAGVVAALI. Arg-213 is a substrate binding site.

It belongs to the Cu-Zn superoxide dismutase family. The cofactor is Cu cation. Zn(2+) serves as cofactor. In terms of processing, the GPI-anchor is attached to the protein in the endoplasmic reticulum and serves to target the protein to the cell surface. There, the glucosamine-inositol phospholipid moiety is cleaved off and the GPI-modified mannoprotein is covalently attached via its lipidless GPI glycan remnant to the 1,6-beta-glucan of the outer cell wall layer.

The protein resides in the secreted. It localises to the cell wall. The protein localises to the membrane. It carries out the reaction 2 superoxide + 2 H(+) = H2O2 + O2. Superoxide dismutases serve to convert damaging superoxide radicals, a key form of ROS, to less damaging hydrogen peroxide that can be converted into water by catalase action. Degrades host-derived reactive oxygen species to escape innate immune surveillance. Involved in the occurrence of miconazole-tolerant persisters in biofilms. Persisters are cells that survive high doses of an antimicrobial agent. This Candida albicans (strain SC5314 / ATCC MYA-2876) (Yeast) protein is Cell surface superoxide dismutase [Cu-Zn] 4 (SOD4).